A 442-amino-acid polypeptide reads, in one-letter code: MSEIGSYHDTIFALSSGRLPSGVAVIRISGPKTRFVYETICQAIPEPRHAALLTFRSRNGDAIDRGLILFFPAPHSFTGEDCAEFHLHGGKAVVEKMLAVLGELPGCRIAEAGEFTRRAFANGKMDLTIAEGLADLIAAETEGQRRLAMQVASGNQRKLYSEWRQRLINARAFIEAELDFADESDVPGSVSMQVWQQLSALKHEIEHHIASGKRAAMLRDGLHVVIVGAPNAGKSSLLNFLAGRDVAIISKEAGTTRDLLEVKLDLGGIPVYVTDTAGLRETDSVVEKIGIERARARMAEADLVLSLEDMSGPVSVTVEKIEAETWLIGTKADLGGSASGLWKYHISTMTGSGLEQLLDALQAFAEAKIGQIEDAVPTRQRHINLLRATIEEIEKAIEGDDLPLELRAENMRLASQFLGRITGDVDVEEILDVIFSQFCIGK.

Residues R27, E84, and K124 each coordinate (6S)-5-formyl-5,6,7,8-tetrahydrofolate. Residues 221-366 (GLHVVIVGAP…LLDALQAFAE (146 aa)) enclose the TrmE-type G domain. Residues 231–236 (NAGKSS), 250–256 (SKEAGTT), and 275–278 (DTAG) each bind GTP. Positions 235 and 256 each coordinate Mg(2+). K442 is a binding site for (6S)-5-formyl-5,6,7,8-tetrahydrofolate.

Belongs to the TRAFAC class TrmE-Era-EngA-EngB-Septin-like GTPase superfamily. TrmE GTPase family. In terms of assembly, homodimer. Heterotetramer of two MnmE and two MnmG subunits. It depends on K(+) as a cofactor.

The protein resides in the cytoplasm. Its function is as follows. Exhibits a very high intrinsic GTPase hydrolysis rate. Involved in the addition of a carboxymethylaminomethyl (cmnm) group at the wobble position (U34) of certain tRNAs, forming tRNA-cmnm(5)s(2)U34. The sequence is that of tRNA modification GTPase MnmE from Brucella canis (strain ATCC 23365 / NCTC 10854 / RM-666).